The primary structure comprises 282 residues: Protein OS-9 homolog (282 aa).

The signal sequence occupies residues 1 to 23 (MRITQILLCLVIVALSSSSHVWS). Residue Asn-94 is glycosylated (N-linked (GlcNAc...) asparagine). The MRH domain occupies 120–239 (EKCLFRQEGW…TVQCPTLCKH (120 aa)). Cys-122 and Cys-135 form a disulfide bridge. The a mannooligosaccharide derivative site is built by Trp-129, Trp-130, and Gln-142. N-linked (GlcNAc...) asparagine glycans are attached at residues Asn-169 and Asn-190. 2 cysteine pairs are disulfide-bonded: Cys-194–Cys-225 and Cys-209–Cys-237. Asp-195, Arg-201, Glu-221, and Tyr-227 together coordinate a mannooligosaccharide derivative. The span at 262-276 (DATRNKEEQAVDESP) shows a compositional bias: basic and acidic residues. Residues 262 to 282 (DATRNKEEQAVDESPKMIADS) form a disordered region.

It belongs to the OS-9 family. As to quaternary structure, interacts with HRD3A.

The protein resides in the endoplasmic reticulum. Lectin which functions in endoplasmic reticulum (ER) quality control and ER-associated degradation (ERAD). May bind terminally misfolded non-glycosylated proteins as well as improperly folded glycoproteins, retain them in the ER, and possibly transfer them to the ubiquitination machinery and promote their degradation. Targets the misfolded LRR receptor kinase BRI1 and the misfolded receptor-like kinase EFR. The chain is Protein OS-9 homolog from Arabidopsis thaliana (Mouse-ear cress).